The chain runs to 194 residues: Endonuclease V (194 aa).

The Mg(2+) site is built by aspartate 31 and glutamate 95.

It belongs to the endonuclease V family. Requires Mg(2+) as cofactor.

It localises to the cytoplasm. The catalysed reaction is Endonucleolytic cleavage at apurinic or apyrimidinic sites to products with a 5'-phosphate.. In terms of biological role, DNA repair enzyme involved in the repair of deaminated bases. Selectively cleaves double-stranded DNA at the second phosphodiester bond 3' to a deoxyinosine leaving behind the intact lesion on the nicked DNA. This Pyrococcus abyssi (strain GE5 / Orsay) protein is Endonuclease V.